A 420-amino-acid chain; its full sequence is Pregnancy-associated glycoprotein 2 (420 aa).

Positions 1-15 (MKWLVILGLVALSDC) are cleaved as a signal peptide. 2 N-linked (GlcNAc...) asparagine glycosylation sites follow: Asn56 and Asn79. The Peptidase A1 domain maps to 76–417 (YVGNISIGTP…DEGQNRIGLA (342 aa)). The active site involves Asp94. Disulfide bonds link Cys107-Cys112 and Cys268-Cys272. The active site involves Asp277. The cysteines at positions 341 and 376 are disulfide-linked.

This sequence belongs to the peptidase A1 family. As to expression, expressed throughout the chorion, with the signal localized exclusively over the trophectoderm.

The protein localises to the secreted. The protein resides in the extracellular space. The chain is Pregnancy-associated glycoprotein 2 (PAG2) from Sus scrofa (Pig).